The primary structure comprises 511 residues: Myrosinase 4 (511 aa).

A signal peptide spans 1 to 23; the sequence is MAIPKAHYSLAVLVLLFVVVSSS. Disulfide bonds link Cys31/Cys450, Cys39/Cys445, and Cys230/Cys233. N-linked (GlcNAc...) asparagine glycans are attached at residues Asn46 and Asn53. Residues Gln64, His165, and 210-211 each bind a beta-D-glucoside; that span reads NQ. Positions 351 and 418 each coordinate a beta-D-glucoside. The active-site Nucleophile is the Glu418. Asn428 carries an N-linked (GlcNAc...) asparagine glycan. A beta-D-glucoside-binding positions include Trp467, 474–475, and Phe483; that span reads EF. An N-linked (GlcNAc...) asparagine glycan is attached at Asn489.

Belongs to the glycosyl hydrolase 1 family. In terms of tissue distribution, specifically expressed in roots.

It carries out the reaction a thioglucoside + H2O = a sugar + a thiol.. The enzyme catalyses Hydrolysis of terminal, non-reducing beta-D-glucosyl residues with release of beta-D-glucose.. Hydrolyzes sinigrin and, with lower efficiency, p-nitrophenyl beta-D-glucoside. This Arabidopsis thaliana (Mouse-ear cress) protein is Myrosinase 4.